Consider the following 339-residue polypeptide: Ketol-acid reductoisomerase (NADP(+)) (339 aa).

Residues 1–182 (MRVYYDRDAD…GGGRSGIIET (182 aa)) form the KARI N-terminal Rossmann domain. NADP(+) contacts are provided by residues 24–27 (YGSQ), R48, S51, S53, and 83–86 (DELQ). Residue H108 is part of the active site. G134 is an NADP(+) binding site. One can recognise a KARI C-terminal knotted domain in the interval 183-328 (TFREECETDL…EKLRGMMPWI (146 aa)). Mg(2+)-binding residues include D191, E195, E227, and E231. S252 contacts substrate.

The protein belongs to the ketol-acid reductoisomerase family. Requires Mg(2+) as cofactor.

It carries out the reaction (2R)-2,3-dihydroxy-3-methylbutanoate + NADP(+) = (2S)-2-acetolactate + NADPH + H(+). The catalysed reaction is (2R,3R)-2,3-dihydroxy-3-methylpentanoate + NADP(+) = (S)-2-ethyl-2-hydroxy-3-oxobutanoate + NADPH + H(+). It functions in the pathway amino-acid biosynthesis; L-isoleucine biosynthesis; L-isoleucine from 2-oxobutanoate: step 2/4. It participates in amino-acid biosynthesis; L-valine biosynthesis; L-valine from pyruvate: step 2/4. Functionally, involved in the biosynthesis of branched-chain amino acids (BCAA). Catalyzes an alkyl-migration followed by a ketol-acid reduction of (S)-2-acetolactate (S2AL) to yield (R)-2,3-dihydroxy-isovalerate. In the isomerase reaction, S2AL is rearranged via a Mg-dependent methyl migration to produce 3-hydroxy-3-methyl-2-ketobutyrate (HMKB). In the reductase reaction, this 2-ketoacid undergoes a metal-dependent reduction by NADPH to yield (R)-2,3-dihydroxy-isovalerate. The chain is Ketol-acid reductoisomerase (NADP(+)) from Magnetospirillum molischianum (Rhodospirillum molischianum).